The following is a 931-amino-acid chain: Valine--tRNA ligase (931 aa).

The 'HIGH' region motif lies at 42 to 52; it reads PNVTGSLHMGH. The 'KMSKS' region motif lies at 523–527; that stretch reads KMSKS. An ATP-binding site is contributed by lysine 526. Residues 859-931 are a coiled coil; that stretch reads MAGLIDKEAE…EEQLEKIKYL (73 aa).

The protein belongs to the class-I aminoacyl-tRNA synthetase family. ValS type 1 subfamily. In terms of assembly, monomer.

Its subcellular location is the cytoplasm. The enzyme catalyses tRNA(Val) + L-valine + ATP = L-valyl-tRNA(Val) + AMP + diphosphate. Functionally, catalyzes the attachment of valine to tRNA(Val). As ValRS can inadvertently accommodate and process structurally similar amino acids such as threonine, to avoid such errors, it has a 'posttransfer' editing activity that hydrolyzes mischarged Thr-tRNA(Val) in a tRNA-dependent manner. The chain is Valine--tRNA ligase from Alcanivorax borkumensis (strain ATCC 700651 / DSM 11573 / NCIMB 13689 / SK2).